We begin with the raw amino-acid sequence, 201 residues long: Large ribosomal subunit protein uL4 (201 aa).

A disordered region spans residues 45–72 (AQKTRAEVTGSGKKPWRQKGTGRARAGS).

Belongs to the universal ribosomal protein uL4 family. As to quaternary structure, part of the 50S ribosomal subunit.

Functionally, one of the primary rRNA binding proteins, this protein initially binds near the 5'-end of the 23S rRNA. It is important during the early stages of 50S assembly. It makes multiple contacts with different domains of the 23S rRNA in the assembled 50S subunit and ribosome. In terms of biological role, forms part of the polypeptide exit tunnel. This chain is Large ribosomal subunit protein uL4, found in Shewanella frigidimarina (strain NCIMB 400).